Here is a 272-residue protein sequence, read N- to C-terminus: Alcohol dehydrogenase-related 31 kDa protein (272 aa).

Position 11 to 34 (11 to 34 (YVADCGGIALETSKVLMTKNIAKL)) interacts with NAD(+). Substrate is bound at residue serine 139. Residue tyrosine 152 is the Proton acceptor of the active site.

It belongs to the short-chain dehydrogenases/reductases (SDR) family.

This is Alcohol dehydrogenase-related 31 kDa protein (Adhr) from Drosophila teissieri (Fruit fly).